The primary structure comprises 290 residues: 4-hydroxybenzoate octaprenyltransferase (290 aa).

The next 6 helical transmembrane spans lie at 41-61, 89-109, 133-153, 158-178, 202-224, and 269-289; these read WPLV…GCAM, WEAV…ILPL, FFAI…PMAF, GTVP…SVAY, FGRF…YAWI, and WLGG…GAAG.

The protein belongs to the UbiA prenyltransferase family. Mg(2+) serves as cofactor.

The protein localises to the cell inner membrane. It carries out the reaction all-trans-octaprenyl diphosphate + 4-hydroxybenzoate = 4-hydroxy-3-(all-trans-octaprenyl)benzoate + diphosphate. It functions in the pathway cofactor biosynthesis; ubiquinone biosynthesis. Catalyzes the prenylation of para-hydroxybenzoate (PHB) with an all-trans polyprenyl group. Mediates the second step in the final reaction sequence of ubiquinone-8 (UQ-8) biosynthesis, which is the condensation of the polyisoprenoid side chain with PHB, generating the first membrane-bound Q intermediate 3-octaprenyl-4-hydroxybenzoate. This is 4-hydroxybenzoate octaprenyltransferase from Burkholderia vietnamiensis (strain G4 / LMG 22486) (Burkholderia cepacia (strain R1808)).